The primary structure comprises 93 residues: Integration host factor subunit beta (93 aa).

It belongs to the bacterial histone-like protein family. As to quaternary structure, heterodimer of an alpha and a beta chain.

Functionally, this protein is one of the two subunits of integration host factor, a specific DNA-binding protein that functions in genetic recombination as well as in transcriptional and translational control. The protein is Integration host factor subunit beta (ihfB) of Mannheimia haemolytica (Pasteurella haemolytica).